Consider the following 185-residue polypeptide: Transcription termination/antitermination protein NusG (185 aa).

Positions 134–164 (VGKRVRIVDGAFSGFEAPITEINGDKLTLTV) constitute a KOW domain.

It belongs to the NusG family.

Participates in transcription elongation, termination and antitermination. This chain is Transcription termination/antitermination protein NusG, found in Lactococcus lactis subsp. lactis (strain IL1403) (Streptococcus lactis).